A 476-amino-acid polypeptide reads, in one-letter code: Arginine biosynthesis bifunctional protein ArgJ, mitochondrial (476 aa).

6 residues coordinate substrate: T193, K219, T237, E337, N471, and S476. The Nucleophile role is filled by T237.

The protein belongs to the ArgJ family. As to quaternary structure, heterodimer of an alpha and a beta chain. Post-translationally, the alpha and beta chains are autoproteolytically processed from a single precursor protein within the mitochondrion.

It localises to the mitochondrion matrix. It carries out the reaction N(2)-acetyl-L-ornithine + L-glutamate = N-acetyl-L-glutamate + L-ornithine. It catalyses the reaction L-glutamate + acetyl-CoA = N-acetyl-L-glutamate + CoA + H(+). Its pathway is amino-acid biosynthesis; L-arginine biosynthesis; L-ornithine and N-acetyl-L-glutamate from L-glutamate and N(2)-acetyl-L-ornithine (cyclic): step 1/1. It functions in the pathway amino-acid biosynthesis; L-arginine biosynthesis; N(2)-acetyl-L-ornithine from L-glutamate: step 1/4. Functionally, catalyzes two activities which are involved in the cyclic version of arginine biosynthesis: the synthesis of acetylglutamate from glutamate and acetyl-CoA, and of ornithine by transacetylation between acetylornithine and glutamate. The chain is Arginine biosynthesis bifunctional protein ArgJ, mitochondrial from Cryptococcus neoformans var. neoformans serotype D (strain JEC21 / ATCC MYA-565) (Filobasidiella neoformans).